The sequence spans 54 residues: Potassium channel toxin alpha-KTx 14.3 (54 aa).

The first 23 residues, 1–23 (MKIFFAILLILAVCSMAIWTVNG), serve as a signal peptide directing secretion.

This sequence belongs to the short scorpion toxin superfamily. Potassium channel inhibitor family. Alpha-KTx 14 subfamily. In terms of processing, contains 3 disulfide bridges. As to expression, expressed by the venom gland.

It is found in the secreted. Potential blocker of potassium channels. The chain is Potassium channel toxin alpha-KTx 14.3 from Olivierus martensii (Manchurian scorpion).